Consider the following 374-residue polypeptide: tRNA-specific 2-thiouridylase MnmA (374 aa).

Residues 13-20 (GMSGGVDS) and Met-39 each bind ATP. Residues 99 to 101 (NPD) are interaction with target base in tRNA. The Nucleophile role is filled by Cys-104. Cys-104 and Cys-201 form a disulfide bridge. Residue Gly-128 participates in ATP binding. Residues 151–153 (KDQ) form an interaction with tRNA region. Cys-201 functions as the Cysteine persulfide intermediate in the catalytic mechanism. Positions 313–314 (RY) are interaction with tRNA.

The protein belongs to the MnmA/TRMU family.

The protein resides in the cytoplasm. It catalyses the reaction S-sulfanyl-L-cysteinyl-[protein] + uridine(34) in tRNA + AH2 + ATP = 2-thiouridine(34) in tRNA + L-cysteinyl-[protein] + A + AMP + diphosphate + H(+). Functionally, catalyzes the 2-thiolation of uridine at the wobble position (U34) of tRNA, leading to the formation of s(2)U34. In Streptococcus equi subsp. zooepidemicus (strain H70), this protein is tRNA-specific 2-thiouridylase MnmA.